The following is a 660-amino-acid chain: Zinc transporter ZIP4 (660 aa).

The signal sequence occupies residues 1–22 (MLPKSVTQGLVLALLVGTVAVA). The Extracellular segment spans residues 23–337 (RPRNLLSLLA…QDQLSQTERY (315 aa)). 3 disulfides stabilise this stretch: C56–C61, C64–C110, and C160–C195. N-linked (GlcNAc...) asparagine glycosylation is found at N192 and N219. The interval 233 to 273 (GVGGEDHSDHDDHGDHADHSHPDRKASHQDSELHTPHNSNS) is disordered. The segment covering 236–267 (GEDHSDHDDHGDHADHSHPDRKASHQDSELHT) has biased composition (basic and acidic residues). Residue N272 is glycosylated (N-linked (GlcNAc...) asparagine). A disulfide bridge links C280 with C319. The helical transmembrane segment at 338 to 358 (LYGSLATLLICLCAVFGLLLL) threads the bilayer. The Cytoplasmic portion of the chain corresponds to 359 to 376 (TCAKCSTATHYIMQTFLS). The helical transmembrane segment at 377–397 (LAVGALTGDALLHLIPKVLGL) threads the bilayer. Residues 398-420 (HTHGGEGHTHEEEVGVGGQATWR) are Extracellular-facing. A helical membrane pass occupies residues 421–441 (LLAVLGGFYIFFLFESFFNLL). Residues 442 to 511 (LPRDQDSEKD…LRAELRLLPY (70 aa)) are Cytoplasmic-facing. An Essential for SLC39A4 endocytosis motif is present at residues 465 to 467 (LQL). A helical membrane pass occupies residues 512–531 (LITLGDAVHNFADGLAVGAA). Positions 520, 521, and 524 each coordinate Zn(2+). The Extracellular portion of the chain corresponds to 532–539 (FSSSWKTG). The helical transmembrane segment at 540–566 (LATSLAVFCHELPHELGDFAALLHAGL) threads the bilayer. Residues H549, E550, and H553 each contribute to the Zn(2+) site. Over 567 to 571 (SVKRA) the chain is Cytoplasmic. Residues 572–592 (LLLNLASALTAFAGLYVALAV) form a helical membrane-spanning segment. Over 593 to 599 (GVGEEGE) the chain is Extracellular. A helical membrane pass occupies residues 600-620 (AWILAVATGLFLYVALCDMLP). Residues 621–630 (AMMNVRDQRP) lie on the Cytoplasmic side of the membrane. Residues 631–651 (WLLFLLHNVGLLGGWTVLLLL) traverse the membrane as a helical segment. Over 652–660 (SLYEDNITF) the chain is Extracellular. N-linked (GlcNAc...) asparagine glycosylation is present at N657.

It belongs to the ZIP transporter (TC 2.A.5) family. In terms of assembly, homodimer. Homodimerization is mediated by the transmembrane domain. Post-translationally, the extracellular N-terminal ectodomain is cleaved when cells are Zn(2+) deficient, N-terminally cleaved SLC39A4 is then internalized faster. Under excess Zn(2+) conditions, SLC39A4 on the cell surface is rapidly endocytosed, ubiquitinated, and degraded. In terms of processing, N-glycosylated. As to expression, highly expressed in the small intestine and embryonic visceral yolk sac. Weakly expressed in the stomach and liver.

The protein resides in the cell membrane. It is found in the recycling endosome membrane. It localises to the apical cell membrane. The catalysed reaction is Zn(2+)(in) = Zn(2+)(out). Its function is as follows. Selective transporter that mediates the uptake of Zn(2+). Plays an essential role for dietary zinc uptake from small intestine. The Zn(2+) uniporter activity is regulated by zinc availability. Also exhibits polyspecific binding and transport of Cu(2+), Cd(2+) and possibly Ni(2+) but at higher concentrations. This Mus musculus (Mouse) protein is Zinc transporter ZIP4 (Slc39a4).